A 142-amino-acid polypeptide reads, in one-letter code: MAKKITGFVKLQVPAGAANPSPPIGPALGQRGLNIMEFCKAFNARTAQMEKGTPIPVVITAYGDRSFTFEMKLPPVSYFLKKASGIASGSKTAGRGFAGKISKAQIREIAEKKMPDLNCASVDAAMTMIEGSARSMGLEITG.

It belongs to the universal ribosomal protein uL11 family. In terms of assembly, part of the ribosomal stalk of the 50S ribosomal subunit. Interacts with L10 and the large rRNA to form the base of the stalk. L10 forms an elongated spine to which L12 dimers bind in a sequential fashion forming a multimeric L10(L12)X complex. Post-translationally, one or more lysine residues are methylated.

Forms part of the ribosomal stalk which helps the ribosome interact with GTP-bound translation factors. The protein is Large ribosomal subunit protein uL11 of Methylocella silvestris (strain DSM 15510 / CIP 108128 / LMG 27833 / NCIMB 13906 / BL2).